The primary structure comprises 1118 residues: Isoleucine--tRNA ligase (1118 aa).

The 'HIGH' region signature appears at 64-74 (PFANGLPHYGH). The short motif at 647-651 (KLSKR) is the 'KMSKS' region element. Lys-650 contacts ATP.

Belongs to the class-I aminoacyl-tRNA synthetase family. IleS type 2 subfamily. As to quaternary structure, monomer. Requires Zn(2+) as cofactor.

It localises to the cytoplasm. The enzyme catalyses tRNA(Ile) + L-isoleucine + ATP = L-isoleucyl-tRNA(Ile) + AMP + diphosphate. In terms of biological role, catalyzes the attachment of isoleucine to tRNA(Ile). As IleRS can inadvertently accommodate and process structurally similar amino acids such as valine, to avoid such errors it has two additional distinct tRNA(Ile)-dependent editing activities. One activity is designated as 'pretransfer' editing and involves the hydrolysis of activated Val-AMP. The other activity is designated 'posttransfer' editing and involves deacylation of mischarged Val-tRNA(Ile). The chain is Isoleucine--tRNA ligase from Ehrlichia ruminantium (strain Gardel).